Consider the following 455-residue polypeptide: Bifunctional protein GlmU (455 aa).

Positions 1 to 226 (MGLSVVILAA…EFEILGVNDR (226 aa)) are pyrophosphorylase. UDP-N-acetyl-alpha-D-glucosamine contacts are provided by residues 8 to 11 (LAAG), lysine 22, glutamine 73, 78 to 79 (GT), 99 to 101 (YGD), glycine 136, glutamate 151, asparagine 166, and asparagine 224. Aspartate 101 is a Mg(2+) binding site. Residue asparagine 224 coordinates Mg(2+). Positions 227-247 (TQLASLERVWQRNVAEKIMAK) are linker. Positions 248–455 (GVSIADPNRF…WQRSVKKTDK (208 aa)) are N-acetyltransferase. UDP-N-acetyl-alpha-D-glucosamine contacts are provided by arginine 330 and lysine 348. Histidine 360 acts as the Proton acceptor in catalysis. The UDP-N-acetyl-alpha-D-glucosamine site is built by tyrosine 363 and asparagine 374. Acetyl-CoA contacts are provided by residues alanine 377, 383-384 (NY), serine 402, alanine 420, and arginine 437.

The protein in the N-terminal section; belongs to the N-acetylglucosamine-1-phosphate uridyltransferase family. It in the C-terminal section; belongs to the transferase hexapeptide repeat family. As to quaternary structure, homotrimer. The cofactor is Mg(2+).

Its subcellular location is the cytoplasm. The enzyme catalyses alpha-D-glucosamine 1-phosphate + acetyl-CoA = N-acetyl-alpha-D-glucosamine 1-phosphate + CoA + H(+). It catalyses the reaction N-acetyl-alpha-D-glucosamine 1-phosphate + UTP + H(+) = UDP-N-acetyl-alpha-D-glucosamine + diphosphate. It functions in the pathway nucleotide-sugar biosynthesis; UDP-N-acetyl-alpha-D-glucosamine biosynthesis; N-acetyl-alpha-D-glucosamine 1-phosphate from alpha-D-glucosamine 6-phosphate (route II): step 2/2. The protein operates within nucleotide-sugar biosynthesis; UDP-N-acetyl-alpha-D-glucosamine biosynthesis; UDP-N-acetyl-alpha-D-glucosamine from N-acetyl-alpha-D-glucosamine 1-phosphate: step 1/1. It participates in bacterial outer membrane biogenesis; LPS lipid A biosynthesis. Its function is as follows. Catalyzes the last two sequential reactions in the de novo biosynthetic pathway for UDP-N-acetylglucosamine (UDP-GlcNAc). The C-terminal domain catalyzes the transfer of acetyl group from acetyl coenzyme A to glucosamine-1-phosphate (GlcN-1-P) to produce N-acetylglucosamine-1-phosphate (GlcNAc-1-P), which is converted into UDP-GlcNAc by the transfer of uridine 5-monophosphate (from uridine 5-triphosphate), a reaction catalyzed by the N-terminal domain. This is Bifunctional protein GlmU from Francisella tularensis subsp. holarctica (strain OSU18).